A 350-amino-acid polypeptide reads, in one-letter code: MSGNTFGQIFKVTTYGESHGPGLGGVIDGCPAGIELSEEIIQLELDRRKPGQGIASTARKEADRVKILSGVFEGRTTGTSIGFHIENTDQRSHDYSKIMNVYRPGHADRTFDAKYGFRDYRGGGRSSGRETVSRVAGGAVAQEFLRQQSISCQAYTVRIGGIDGEVKAPEKAHELPFFSADPDVIPSWEERIKEVRSQGDTLGGVVEVCIKGVPAGLGEPVFDKLDARLAYALMSVGAVKGVEIGAGCKAADALGSENNDFMDGDGFCSNNAGGVLGGISSGQDVVVRAYVKPIPSISKPQQTVDRDGNATEIKIGGRHDICAIPRIVPVLKSMAMLTVADFILLQRRMG.

Arg-48 is an NADP(+) binding site. Residues 125-127 (RSS), Gly-277, 292-296 (KPIPS), and Arg-318 each bind FMN.

It belongs to the chorismate synthase family. Homotetramer. The cofactor is FMNH2.

It catalyses the reaction 5-O-(1-carboxyvinyl)-3-phosphoshikimate = chorismate + phosphate. It functions in the pathway metabolic intermediate biosynthesis; chorismate biosynthesis; chorismate from D-erythrose 4-phosphate and phosphoenolpyruvate: step 7/7. Its function is as follows. Catalyzes the anti-1,4-elimination of the C-3 phosphate and the C-6 proR hydrogen from 5-enolpyruvylshikimate-3-phosphate (EPSP) to yield chorismate, which is the branch point compound that serves as the starting substrate for the three terminal pathways of aromatic amino acid biosynthesis. This reaction introduces a second double bond into the aromatic ring system. The sequence is that of Chorismate synthase from Maridesulfovibrio salexigens (strain ATCC 14822 / DSM 2638 / NCIMB 8403 / VKM B-1763) (Desulfovibrio salexigens).